A 217-amino-acid polypeptide reads, in one-letter code: Serine acetyltransferase (217 aa).

It belongs to the transferase hexapeptide repeat family.

It is found in the cytoplasm. It catalyses the reaction L-serine + acetyl-CoA = O-acetyl-L-serine + CoA. The protein operates within amino-acid biosynthesis; L-cysteine biosynthesis; L-cysteine from L-serine: step 1/2. With respect to regulation, inhibited by cysteine. Functionally, catalyzes the acetylation of serine by acetyl-CoA to produce O-acetylserine (OAS). In Bacillus subtilis (strain 168), this protein is Serine acetyltransferase (cysE).